We begin with the raw amino-acid sequence, 319 residues long: Beta-ketoacyl-[acyl-carrier-protein] synthase III (319 aa).

Residues cysteine 113 and histidine 246 contribute to the active site. The segment at 247–251 is ACP-binding; sequence QANIR. Asparagine 276 is a catalytic residue.

This sequence belongs to the thiolase-like superfamily. FabH family. As to quaternary structure, homodimer.

The protein localises to the cytoplasm. It catalyses the reaction malonyl-[ACP] + acetyl-CoA + H(+) = 3-oxobutanoyl-[ACP] + CO2 + CoA. It participates in lipid metabolism; fatty acid biosynthesis. In terms of biological role, catalyzes the condensation reaction of fatty acid synthesis by the addition to an acyl acceptor of two carbons from malonyl-ACP. Catalyzes the first condensation reaction which initiates fatty acid synthesis and may therefore play a role in governing the total rate of fatty acid production. Possesses both acetoacetyl-ACP synthase and acetyl transacylase activities. Its substrate specificity determines the biosynthesis of branched-chain and/or straight-chain of fatty acids. The chain is Beta-ketoacyl-[acyl-carrier-protein] synthase III from Ehrlichia ruminantium (strain Gardel).